The following is a 426-amino-acid chain: 3-phosphoshikimate 1-carboxyvinyltransferase (426 aa).

The 3-phosphoshikimate site is built by K20, S21, and R25. K20 is a binding site for phosphoenolpyruvate. 2 residues coordinate phosphoenolpyruvate: G92 and R120. 4 residues coordinate 3-phosphoshikimate: S166, Q168, D312, and K339. Position 168 (Q168) interacts with phosphoenolpyruvate. Catalysis depends on D312, which acts as the Proton acceptor. R385 contributes to the phosphoenolpyruvate binding site.

Belongs to the EPSP synthase family. As to quaternary structure, monomer.

The protein localises to the cytoplasm. The catalysed reaction is 3-phosphoshikimate + phosphoenolpyruvate = 5-O-(1-carboxyvinyl)-3-phosphoshikimate + phosphate. The protein operates within metabolic intermediate biosynthesis; chorismate biosynthesis; chorismate from D-erythrose 4-phosphate and phosphoenolpyruvate: step 6/7. Functionally, catalyzes the transfer of the enolpyruvyl moiety of phosphoenolpyruvate (PEP) to the 5-hydroxyl of shikimate-3-phosphate (S3P) to produce enolpyruvyl shikimate-3-phosphate and inorganic phosphate. This chain is 3-phosphoshikimate 1-carboxyvinyltransferase, found in Streptococcus suis (strain 98HAH33).